The sequence spans 470 residues: Cell division protein FtsP (470 aa).

A signal peptide (tat-type signal) is located at residues 1-27 (MSLSRRQFIQASGIALCAGAVPLKASA). The 97-residue stretch at 68–164 (WGINGRYLGP…NGLAGMWLVE (97 aa)) folds into the Plastocyanin-like domain.

The protein belongs to the FtsP family. In terms of processing, exported by the Tat system. The position of the signal peptide cleavage has been experimentally proven. Can also be exported by the Sec system.

It localises to the periplasm. Functionally, cell division protein that is required for growth during stress conditions. May be involved in protecting or stabilizing the divisomal assembly under conditions of stress. The sequence is that of Cell division protein FtsP from Escherichia coli (strain K12).